Consider the following 381-residue polypeptide: rRNA adenine N-6-methyltransferase (381 aa).

The span at 1 to 19 shows a compositional bias: basic and acidic residues; it reads MSSSDEQPRPRRRNQDRQH. Residues 1 to 42 form a disordered region; that stretch reads MSSSDEQPRPRRRNQDRQHPNQNRPVLGRTERDRNRRQFGQN. 6 residues coordinate S-adenosyl-L-methionine: Asn-42, Leu-44, Gly-69, Glu-90, Asp-115, and Ala-131. Residues 282-381 form a disordered region; the sequence is RLDQKNEPRG…PGRRGGPGQR (100 aa). Basic and acidic residues predominate over residues 301 to 358; sequence GGRDHGDRRTGGQDRGDRRTGGRDHRDRQASGHGDRRSSGRNRDDGRTGEREQGDQGG. Residues 359–381 show a composition bias toward gly residues; it reads RRGPSGGGRTGGRPGRRGGPGQR.

It belongs to the class I-like SAM-binding methyltransferase superfamily. rRNA adenine N(6)-methyltransferase family.

It carries out the reaction adenosine(2085) in 23S rRNA + 2 S-adenosyl-L-methionine = N(6)-dimethyladenosine(2085) in 23S rRNA + 2 S-adenosyl-L-homocysteine + 2 H(+). In terms of biological role, this protein produces a dimethylation of the adenine residue at position 2085 in 23S rRNA, resulting in reduced affinity between ribosomes and macrolide-lincosamide-streptogramin B antibiotics. This chain is rRNA adenine N-6-methyltransferase (ermE), found in Saccharopolyspora erythraea (strain ATCC 11635 / DSM 40517 / JCM 4748 / NBRC 13426 / NCIMB 8594 / NRRL 2338).